Here is a 191-residue protein sequence, read N- to C-terminus: Protein G1-like1 (191 aa).

Residues methionine 1 to arginine 29 are disordered. An ALOG domain is found at arginine 23–arginine 150. Positions lysine 148–lysine 152 match the Nuclear localization signal motif. The stretch at lysine 152–histidine 179 forms a coiled coil.

Belongs to the plant homeotic and developmental regulators ALOG protein family.

The protein localises to the nucleus. In terms of biological role, probable transcription regulator that acts as a developmental regulator by promoting cell growth in response to light. The polypeptide is Protein G1-like1 (Oryza sativa subsp. indica (Rice)).